A 66-amino-acid polypeptide reads, in one-letter code: Large ribosomal subunit protein bL31 (66 aa).

Cys-16, Cys-18, Cys-36, and Cys-39 together coordinate Zn(2+).

Belongs to the bacterial ribosomal protein bL31 family. Type A subfamily. As to quaternary structure, part of the 50S ribosomal subunit. It depends on Zn(2+) as a cofactor.

Functionally, binds the 23S rRNA. This Geobacillus thermodenitrificans (strain NG80-2) protein is Large ribosomal subunit protein bL31.